A 180-amino-acid polypeptide reads, in one-letter code: Protein Flattop (180 aa).

The disordered stretch occupies residues 111–180; sequence PQISGKASGK…AGDKVLQAQS (70 aa).

The protein belongs to the Flattop family.

The protein resides in the cytoplasm. Its subcellular location is the cytoskeleton. It is found in the cilium basal body. It localises to the cell projection. The protein localises to the cilium. The protein resides in the apical cell membrane. Its subcellular location is the cilium axoneme. Microtubule inner protein (MIP) part of the dynein-decorated doublet microtubules (DMTs) in cilia axoneme. Acts as a regulator of cilium basal body docking and positioning in mono- and multiciliated cells. Regulates basal body docking and cilia formation in multiciliated lung cells. Regulates kinocilium positioning and stereocilia bundle morphogenesis in the inner ear. The polypeptide is Protein Flattop (Xenopus laevis (African clawed frog)).